The following is a 337-amino-acid chain: Pyridoxal 5'-phosphate synthase subunit PdxS (337 aa).

D-ribose 5-phosphate is bound at residue Asp-65. Lys-122 functions as the Schiff-base intermediate with D-ribose 5-phosphate in the catalytic mechanism. Gly-194 is a D-ribose 5-phosphate binding site. Lys-206 is a D-glyceraldehyde 3-phosphate binding site. Residues Gly-255 and 276-277 (GS) contribute to the D-ribose 5-phosphate site.

The protein belongs to the PdxS/SNZ family. In the presence of PdxT, forms a dodecamer of heterodimers.

It carries out the reaction aldehydo-D-ribose 5-phosphate + D-glyceraldehyde 3-phosphate + L-glutamine = pyridoxal 5'-phosphate + L-glutamate + phosphate + 3 H2O + H(+). It participates in cofactor biosynthesis; pyridoxal 5'-phosphate biosynthesis. Its function is as follows. Catalyzes the formation of pyridoxal 5'-phosphate from ribose 5-phosphate (RBP), glyceraldehyde 3-phosphate (G3P) and ammonia. The ammonia is provided by the PdxT subunit. Can also use ribulose 5-phosphate and dihydroxyacetone phosphate as substrates, resulting from enzyme-catalyzed isomerization of RBP and G3P, respectively. The chain is Pyridoxal 5'-phosphate synthase subunit PdxS from Metallosphaera sedula (strain ATCC 51363 / DSM 5348 / JCM 9185 / NBRC 15509 / TH2).